The following is a 462-amino-acid chain: Glycine--tRNA ligase (462 aa).

Arg100 and Glu174 together coordinate substrate. Residues 206–208, 216–221, 290–291, and 334–337 contribute to the ATP site; these read RNE, FRTREF, EL, and GADR. 221-225 contributes to the substrate binding site; sequence FEQME. 330-334 contributes to the substrate binding site; that stretch reads EPSLG.

Belongs to the class-II aminoacyl-tRNA synthetase family. In terms of assembly, homodimer.

The protein resides in the cytoplasm. It carries out the reaction tRNA(Gly) + glycine + ATP = glycyl-tRNA(Gly) + AMP + diphosphate. Functionally, catalyzes the attachment of glycine to tRNA(Gly). This is Glycine--tRNA ligase from Alkaliphilus metalliredigens (strain QYMF).